A 337-amino-acid polypeptide reads, in one-letter code: Protein ABHD13 (337 aa).

Residues 30–50 (LLALILTFHLYGGFVLLGLIL) form a helical; Signal-anchor for type II membrane protein membrane-spanning segment. Residues Ser193, Asp268, and His298 each act as charge relay system in the active site. Asn299 carries an N-linked (GlcNAc...) asparagine glycan.

Belongs to the serine esterase family.

The protein localises to the membrane. This is Protein ABHD13 from Danio rerio (Zebrafish).